A 263-amino-acid chain; its full sequence is uncharacterized protein (263 aa).

The 236-residue stretch at 12-247 (LETQNLAIGY…ENLAKIYRTS (236 aa)) folds into the ABC transporter domain. An ATP-binding site is contributed by 44-51 (GANGAGKS).

Belongs to the ABC transporter superfamily.

This is an uncharacterized protein from Haemophilus influenzae (strain ATCC 51907 / DSM 11121 / KW20 / Rd).